Consider the following 148-residue polypeptide: Pseudoazurin (148 aa).

A signal peptide spans 1-25 (MMIFRALIAAATLAIAIATTLPAAA). Positions 30-118 (VKMLNSGPGG…MGMVALVVVG (89 aa)) constitute a Plastocyanin-like domain. His65, Cys103, His106, and Met111 together coordinate Cu cation.

It depends on Cu cation as a cofactor.

The protein resides in the periplasm. This chain is Pseudoazurin, found in Methylorubrum extorquens (strain ATCC 14718 / DSM 1338 / JCM 2805 / NCIMB 9133 / AM1) (Methylobacterium extorquens).